We begin with the raw amino-acid sequence, 678 residues long: DNA ligase (678 aa).

Residues 34–38 (DSEYD), 83–84 (SL), and E114 contribute to the NAD(+) site. The active-site N6-AMP-lysine intermediate is K116. 4 residues coordinate NAD(+): R137, E176, K293, and K317. Zn(2+) contacts are provided by C411, C414, C429, and C435. The region spanning 594–678 (PTRQPLNGES…LMAGYGQTLS (85 aa)) is the BRCT domain.

The protein belongs to the NAD-dependent DNA ligase family. LigA subfamily. Mg(2+) is required as a cofactor. Requires Mn(2+) as cofactor.

It carries out the reaction NAD(+) + (deoxyribonucleotide)n-3'-hydroxyl + 5'-phospho-(deoxyribonucleotide)m = (deoxyribonucleotide)n+m + AMP + beta-nicotinamide D-nucleotide.. DNA ligase that catalyzes the formation of phosphodiester linkages between 5'-phosphoryl and 3'-hydroxyl groups in double-stranded DNA using NAD as a coenzyme and as the energy source for the reaction. It is essential for DNA replication and repair of damaged DNA. This chain is DNA ligase, found in Acinetobacter baumannii (strain AB307-0294).